The sequence spans 77 residues: U8-lycotoxin-Ls1g (77 aa).

An N-terminal signal peptide occupies residues 1 to 20; the sequence is MKLIIFTGLVLFAIVSLIEV. Residues 21 to 26 constitute a propeptide that is removed on maturation; that stretch reads QADNER.

The protein belongs to the neurotoxin 19 (CSTX) family. 08 (U8-Lctx) subfamily. Post-translationally, contains 4 disulfide bonds. As to expression, expressed by the venom gland.

It localises to the secreted. This is U8-lycotoxin-Ls1g from Lycosa singoriensis (Wolf spider).